A 529-amino-acid polypeptide reads, in one-letter code: Phosphoenolpyruvate carboxykinase (ATP) (529 aa).

Substrate-binding residues include Arg-55, Tyr-190, and Lys-196. Residues Lys-196, His-215, and Gly-231–Thr-239 contribute to the ATP site. Residues Lys-196 and His-215 each coordinate Mn(2+). Asp-252 is a Mn(2+) binding site. 3 residues coordinate ATP: Glu-280, Arg-317, and Thr-442. Arg-317 contacts substrate.

It belongs to the phosphoenolpyruvate carboxykinase (ATP) family. The cofactor is Mn(2+).

It localises to the cytoplasm. It carries out the reaction oxaloacetate + ATP = phosphoenolpyruvate + ADP + CO2. Its pathway is carbohydrate biosynthesis; gluconeogenesis. In terms of biological role, involved in the gluconeogenesis. Catalyzes the conversion of oxaloacetate (OAA) to phosphoenolpyruvate (PEP) through direct phosphoryl transfer between the nucleoside triphosphate and OAA. In Deinococcus geothermalis (strain DSM 11300 / CIP 105573 / AG-3a), this protein is Phosphoenolpyruvate carboxykinase (ATP).